The chain runs to 222 residues: Riboflavin kinase (222 aa).

The segment at 1–92 (MVLAEDLECL…CRLFAHEGGH (92 aa)) is H-T-H motif-like. The riboflavin kinase stretch occupies residues 93–222 (YTLPGIVISG…DRVNVEVAYD (130 aa)). 102 to 107 (GLGEGR) serves as a coordination point for CDP. 2 residues coordinate Mg(2+): Thr-131 and Asn-133. Ser-188 and Glu-196 together coordinate FMN. 201-204 (VGLR) contributes to the CDP binding site.

Belongs to the archaeal riboflavin kinase family. It depends on Mg(2+) as a cofactor.

The enzyme catalyses riboflavin + CTP = CDP + FMN + H(+). It functions in the pathway cofactor biosynthesis; FMN biosynthesis; FMN from riboflavin (CTP route): step 1/1. In terms of biological role, catalyzes the CTP-dependent phosphorylation of riboflavin (vitamin B2) to form flavin mononucleotide (FMN). The chain is Riboflavin kinase (ribK) from Methanoregula boonei (strain DSM 21154 / JCM 14090 / 6A8).